The sequence spans 348 residues: Rhodopsin (348 aa).

At methionine 1 the chain carries N-acetylmethionine. Residues 1–36 (MNGTEGPNFYVPFSNKTGVVRSPFEYPQYYLAEPWQ) are Extracellular-facing. 2 N-linked (GlcNAc...) asparagine glycosylation sites follow: asparagine 2 and asparagine 15. A helical membrane pass occupies residues 37 to 61 (FSMLAAYMFLLIVLGFPINFLTLYV). Residues 62–73 (TVQHKKLRTPLN) lie on the Cytoplasmic side of the membrane. The helical transmembrane segment at 74–96 (YILLNLAVADLFMVFGGFTTTLY) threads the bilayer. Over 97–110 (TSLHGYFVFGPTGC) the chain is Extracellular. A disulfide bond links cysteine 110 and cysteine 187. A helical transmembrane segment spans residues 111-133 (NLEGFFATLGGEIALWSLVVLAI). The 'Ionic lock' involved in activated form stabilization motif lies at 134 to 136 (ERY). Over 134 to 152 (ERYVVVCKPMSNFRFGENH) the chain is Cytoplasmic. The chain crosses the membrane as a helical span at residues 153–173 (AIMGVAFTWVMALACAAPPLV). At 174 to 202 (GWSRYIPEGMQCSCGIDYYTLKPEVNNES) the chain is on the extracellular side. Glutamate 201 lines the Zn(2+) pocket. The helical transmembrane segment at 203–224 (FVIYMFVVHFTIPMIVIFFCYG) threads the bilayer. Over 225 to 252 (QLVFTVKEAAAQQQESATTQKAEKEVTR) the chain is Cytoplasmic. The chain crosses the membrane as a helical span at residues 253–274 (MVIIMVIAFLICWVPYASVAFY). Residues 275–286 (IFTHQGSNFGPI) lie on the Extracellular side of the membrane. Glutamine 279 lines the Zn(2+) pocket. A helical transmembrane segment spans residues 287-308 (FMTLPAFFAKSSSIYNPVIYIM). Lysine 296 is modified (N6-(retinylidene)lysine). At 309 to 348 (MNKQFRNCMLTTLCCGKNPLGDDEASTTGSKTETSQVAPA) the chain is on the cytoplasmic side. 2 S-palmitoyl cysteine lipidation sites follow: cysteine 322 and cysteine 323. Residues 330–348 (DDEASTTGSKTETSQVAPA) form an interaction with SAG region. Serine 334 carries the phosphoserine modification. A phosphothreonine mark is found at threonine 335 and threonine 336. Serine 338 bears the Phosphoserine mark. Phosphothreonine is present on residues threonine 340 and threonine 342. At serine 343 the chain carries Phosphoserine.

This sequence belongs to the G-protein coupled receptor 1 family. Opsin subfamily. Homodimer. May form a complex composed of RHO, GRK1 and RCVRN in a Ca(2+)-dependent manner; RCVRN prevents the interaction between GRK1 and RHO. Interacts with GRK1. Interacts (phosphorylated form) with SAG. Interacts with GNAT1. Interacts with GNAT3. SAG and G-proteins compete for a common binding site. Interacts with PRCD; the interaction promotes PRCD stability. Forms a complex with ASAP1 and ARF4. Forms a complex with ASAP1, RAB11A, Rabin8/RAB3IP, ARF4 and RAB11FIP3; the complex regulates Golgi-to-cilia rhodopsin/RHO transport in photoreceptors. In terms of processing, phosphorylated on some or all of the serine and threonine residues present in the C-terminal region. Post-translationally, contains one covalently linked retinal chromophore. Upon light absorption, the covalently bound 11-cis-retinal is converted to all-trans-retinal. After hydrolysis of the Schiff base and release of the covalently bound all-trans-retinal, active rhodopsin is regenerated by binding of a fresh molecule of 11-cis-retinal.

It is found in the membrane. The protein localises to the cell projection. Its subcellular location is the cilium. The protein resides in the photoreceptor outer segment. Its function is as follows. Photoreceptor required for image-forming vision at low light intensity. Required for photoreceptor cell viability after birth. Light-induced isomerization of 11-cis to all-trans retinal triggers a conformational change that activates signaling via G-proteins. Subsequent receptor phosphorylation mediates displacement of the bound G-protein alpha subunit by the arrestin SAG and terminates signaling. The protein is Rhodopsin (RHO) of Felis catus (Cat).